A 372-amino-acid chain; its full sequence is Chorismate synthase (372 aa).

Position 48 (Arg48) interacts with NADP(+). FMN contacts are provided by residues 131–133, 243–244, Gly288, 303–307, and Arg329; these read RSS, NA, and KPTSS.

This sequence belongs to the chorismate synthase family. Homotetramer. FMNH2 is required as a cofactor.

It carries out the reaction 5-O-(1-carboxyvinyl)-3-phosphoshikimate = chorismate + phosphate. The protein operates within metabolic intermediate biosynthesis; chorismate biosynthesis; chorismate from D-erythrose 4-phosphate and phosphoenolpyruvate: step 7/7. Catalyzes the anti-1,4-elimination of the C-3 phosphate and the C-6 proR hydrogen from 5-enolpyruvylshikimate-3-phosphate (EPSP) to yield chorismate, which is the branch point compound that serves as the starting substrate for the three terminal pathways of aromatic amino acid biosynthesis. This reaction introduces a second double bond into the aromatic ring system. The chain is Chorismate synthase from Caulobacter vibrioides (strain ATCC 19089 / CIP 103742 / CB 15) (Caulobacter crescentus).